Consider the following 700-residue polypeptide: mRNA cap guanine-N(7) methyltransferase (700 aa).

2 stretches are compositionally biased toward basic and acidic residues: residues 1–10 (MVYDPIRDCD) and 52–67 (EPPRAASVHEDAESHR). 2 disordered regions span residues 1–263 (MVYD…SVLR) and 277–392 (AHAN…ERNK). Over residues 113-128 (RSPSMSLSPRSQNQSL) the composition is skewed to polar residues. Composition is skewed to low complexity over residues 129-144 (PYPSSRPGSAAGSAHP) and 220-241 (PQPTTTPSSPSTSQHTPYTPHH). The mRNA cap 0 methyltransferase domain occupies 429–700 (SPIIGLKKFN…LYMGFAFEKM (272 aa)). Position 438–439 (438–439 (NN)) interacts with mRNA. S-adenosyl-L-methionine contacts are provided by lysine 442, glycine 461, aspartate 483, aspartate 512, glutamine 538, and tyrosine 543.

It belongs to the class I-like SAM-binding methyltransferase superfamily. mRNA cap 0 methyltransferase family.

Its subcellular location is the nucleus. The catalysed reaction is a 5'-end (5'-triphosphoguanosine)-ribonucleoside in mRNA + S-adenosyl-L-methionine = a 5'-end (N(7)-methyl 5'-triphosphoguanosine)-ribonucleoside in mRNA + S-adenosyl-L-homocysteine. Functionally, responsible for methylating the 5'-cap structure of mRNAs. This chain is mRNA cap guanine-N(7) methyltransferase (ABD1), found in Cryptococcus neoformans var. neoformans serotype D (strain B-3501A) (Filobasidiella neoformans).